The following is a 696-amino-acid chain: Two-component response regulator ORR22 (696 aa).

In terms of domain architecture, Response regulatory spans 27-142; sequence RVLAVDDDPV…ELRNIWQHVV (116 aa). D78 is modified (4-aspartylphosphate). The tract at residues 154–214 is disordered; sequence LDFSKECNKP…DYQENDEPSA (61 aa). Positions 176–185 are enriched in polar residues; that stretch reads TCGSSDQNGR. Residues 195–211 show a composition bias toward acidic residues; the sequence is GEDDDEGDDNDYQENDE. Residues 214 to 273 constitute a DNA-binding region (myb-like GARP); sequence AAKKPRVVWSVELHRKFVAAVNQLGIDKAVPKRILELMNVEKLTRENVASHLQKYRLYLK.

It belongs to the ARR family. Type-B subfamily. Two-component system major event consists of a His-to-Asp phosphorelay between a sensor histidine kinase (HK) and a response regulator (RR). In plants, the His-to-Asp phosphorelay involves an additional intermediate named Histidine-containing phosphotransfer protein (HPt). This multistep phosphorelay consists of a His-Asp-His-Asp sequential transfer of a phosphate group between first a His and an Asp of the HK protein, followed by the transfer to a conserved His of the HPt protein and finally the transfer to an Asp in the receiver domain of the RR protein.

It localises to the nucleus. In terms of biological role, transcriptional activator that binds specific DNA sequence. Functions as a response regulator involved in His-to-Asp phosphorelay signal transduction system. Phosphorylation of the Asp residue in the receiver domain activates the ability of the protein to promote the transcription of target genes. May directly activate some type-A response regulators in response to cytokinins. This chain is Two-component response regulator ORR22, found in Oryza sativa subsp. indica (Rice).